Reading from the N-terminus, the 129-residue chain is uncharacterized protein (129 aa).

A compositionally biased stretch (basic residues) spans 84–98 (QKTVSKKYKSRKGRR). A disordered region spans residues 84-129 (QKTVSKKYKSRKGRRYTRERNISSEKNKTDKSHKVRVGKIQNINND). Positions 99-115 (YTRERNISSEKNKTDKS) are enriched in basic and acidic residues.

This is an uncharacterized protein from Acanthamoeba polyphaga mimivirus (APMV).